A 677-amino-acid polypeptide reads, in one-letter code: Membrane-associated tyrosine- and threonine-specific cdc2-inhibitory kinase wee-1.3 (677 aa).

The segment covering 1 to 22 has biased composition (polar residues); that stretch reads MDDTEGNSSMDSIRNGQSSPLP. Positions 1 to 30 are disordered; it reads MDDTEGNSSMDSIRNGQSSPLPQVTPRLPQ. The Protein kinase domain occupies 108–355; that stretch reads FQIDEIIGRG…SRDLLDHPVI (248 aa). ATP contacts are provided by residues 114–122 and lysine 137; that span reads IGRGSFGEV. Aspartate 228 acts as the Proton acceptor in catalysis. Mg(2+) contacts are provided by asparagine 233 and aspartate 246. Disordered regions lie at residues 478 to 526 and 632 to 677; these read FDND…GTPR and EPSN…GDEV. Residues 489 to 499 show a composition bias toward polar residues; that stretch reads ATCSSSNSSAI. Over residues 638–652 the composition is skewed to basic and acidic residues; sequence TVDHHTILEQSESPR.

Belongs to the protein kinase superfamily. Ser/Thr protein kinase family. WEE1 subfamily.

The protein localises to the golgi apparatus membrane. It is found in the cytoplasm. The enzyme catalyses L-seryl-[protein] + ATP = O-phospho-L-seryl-[protein] + ADP + H(+). The catalysed reaction is L-threonyl-[protein] + ATP = O-phospho-L-threonyl-[protein] + ADP + H(+). Functionally, acts as a negative regulator of entry into mitosis (G2 to M transition) by phosphorylation of the CDK1 kinase during oocyte maturation. Required for oocyte maturation, embryonic development, germline proliferation and initiation of meiosis during spermatogenesis. Required for chromosome structure during mitosis and negative regulation of nuclear envelope breakdown. The sequence is that of Membrane-associated tyrosine- and threonine-specific cdc2-inhibitory kinase wee-1.3 (wee-1.3) from Caenorhabditis elegans.